A 100-amino-acid chain; its full sequence is Elicitin Vex2 (100 aa).

Intrachain disulfides connect Cys3/Cys71, Cys27/Cys56, and Cys51/Cys95.

It belongs to the elicitin family.

The protein resides in the secreted. Its function is as follows. Induces local and distal defense responses (incompatible hypersensitive reaction) in plants from the solanaceae and cruciferae families. Elicits leaf necrosis and causes the accumulation of pathogenesis-related proteins. Might interact with the lipidic molecules of the plasma membrane. In Phytopythium vexans (Damping-off fungus), this protein is Elicitin Vex2.